We begin with the raw amino-acid sequence, 747 residues long: ATP-dependent RNA helicase DBP7 (747 aa).

Disordered regions lie at residues 1–102 (MDDD…TYVS) and 111–130 (SKLENEKVEEEKTYLPSNAP). The span at 15–24 (SNASSKSSAQ) shows a compositional bias: polar residues. 2 stretches are compositionally biased toward basic and acidic residues: residues 75–96 (SFREEQLAKRPKYFESRGEGGK) and 111–123 (SKLENEKVEEEKT). The Q motif motif lies at 135–164 (DDFNGLGLNDNLVHHLTESLRFKNPTQIQK). Positions 168-363 (PSLLSTSRDL…SIILNNPEQI (196 aa)) constitute a Helicase ATP-binding domain. 181 to 188 (AQTGSGKT) serves as a coordination point for ATP. The short motif at 295–298 (DEGD) is the DEAD box element. A Helicase C-terminal domain is found at 401–626 (TLSAVLKEVA…SSEIKKSDPK (226 aa)). Positions 700–729 (KKLGSLATKSSSTRKEYGEKSRKLEDPRKK) are disordered. Residues 712 to 728 (TRKEYGEKSRKLEDPRK) show a composition bias toward basic and acidic residues.

Belongs to the DEAD box helicase family. DDX31/DBP7 subfamily.

The protein resides in the nucleus. It localises to the nucleolus. It carries out the reaction ATP + H2O = ADP + phosphate + H(+). ATP-binding RNA helicase involved in the biogenesis of 60S ribosomal subunits and is required for the normal formation of 25S and 5.8S rRNAs. This is ATP-dependent RNA helicase DBP7 (DBP7) from Meyerozyma guilliermondii (strain ATCC 6260 / CBS 566 / DSM 6381 / JCM 1539 / NBRC 10279 / NRRL Y-324) (Yeast).